A 77-amino-acid chain; its full sequence is uncharacterized protein (77 aa).

Residues 36-52 traverse the membrane as a helical segment; that stretch reads FYQLILKVLSALLLLSV.

It localises to the membrane. This is an uncharacterized protein from Saccharomyces cerevisiae (strain ATCC 204508 / S288c) (Baker's yeast).